A 109-amino-acid chain; its full sequence is MKGVQTLKTKREFDYVYKRGIAFHSPYFVLFYIPDKDMRIGFVASKKVGKAVQRNRAKRVLKALFIQYFDQLPIGRYVFVAKPKLLGADFKRIDQEMTKILERIKRRKW.

This sequence belongs to the RnpA family. In terms of assembly, consists of a catalytic RNA component (M1 or rnpB) and a protein subunit.

The catalysed reaction is Endonucleolytic cleavage of RNA, removing 5'-extranucleotides from tRNA precursor.. Its function is as follows. RNaseP catalyzes the removal of the 5'-leader sequence from pre-tRNA to produce the mature 5'-terminus. It can also cleave other RNA substrates such as 4.5S RNA. The protein component plays an auxiliary but essential role in vivo by binding to the 5'-leader sequence and broadening the substrate specificity of the ribozyme. This is Ribonuclease P protein component from Nitratiruptor sp. (strain SB155-2).